The primary structure comprises 175 residues: Threonylcarbamoyl-AMP synthase (175 aa).

In terms of domain architecture, YrdC-like spans 1-175 (MLHNDDVIAY…IINGKLIRYV (175 aa)).

It belongs to the SUA5 family. TsaC subfamily.

Its subcellular location is the cytoplasm. The enzyme catalyses L-threonine + hydrogencarbonate + ATP = L-threonylcarbamoyladenylate + diphosphate + H2O. Required for the formation of a threonylcarbamoyl group on adenosine at position 37 (t(6)A37) in tRNAs that read codons beginning with adenine. Catalyzes the conversion of L-threonine, HCO(3)(-)/CO(2) and ATP to give threonylcarbamoyl-AMP (TC-AMP) as the acyladenylate intermediate, with the release of diphosphate. The protein is Threonylcarbamoyl-AMP synthase of Buchnera aphidicola subsp. Acyrthosiphon pisum (strain APS) (Acyrthosiphon pisum symbiotic bacterium).